The following is a 422-amino-acid chain: Phosphoribosylamine--glycine ligase (422 aa).

An ATP-grasp domain is found at 107 to 314 (KAFMQRHGIP…LFDVLDRAID (208 aa)). 133 to 194 (VDREGAPIVI…EEFLAGEEAS (62 aa)) serves as a coordination point for ATP. Residues E284 and N286 each coordinate Mg(2+).

This sequence belongs to the GARS family. It depends on Mg(2+) as a cofactor. Mn(2+) serves as cofactor.

The enzyme catalyses 5-phospho-beta-D-ribosylamine + glycine + ATP = N(1)-(5-phospho-beta-D-ribosyl)glycinamide + ADP + phosphate + H(+). The protein operates within purine metabolism; IMP biosynthesis via de novo pathway; N(1)-(5-phospho-D-ribosyl)glycinamide from 5-phospho-alpha-D-ribose 1-diphosphate: step 2/2. This Ralstonia nicotianae (strain ATCC BAA-1114 / GMI1000) (Ralstonia solanacearum) protein is Phosphoribosylamine--glycine ligase.